A 426-amino-acid chain; its full sequence is D-tagatose-1,6-bisphosphate aldolase subunit KbaZ (426 aa).

It belongs to the GatZ/KbaZ family. KbaZ subfamily. Forms a complex with KbaY.

It participates in carbohydrate metabolism; D-tagatose 6-phosphate degradation; D-glyceraldehyde 3-phosphate and glycerone phosphate from D-tagatose 6-phosphate: step 2/2. Functionally, component of the tagatose-1,6-bisphosphate aldolase KbaYZ that is required for full activity and stability of the Y subunit. Could have a chaperone-like function for the proper and stable folding of KbaY. When expressed alone, KbaZ does not show any aldolase activity. The sequence is that of D-tagatose-1,6-bisphosphate aldolase subunit KbaZ from Shigella flexneri.